The primary structure comprises 77 residues: Secapin-2 (77 aa).

The signal sequence occupies residues 1 to 32; the sequence is MKNYSKNATYLITVLLFSFVTMLLIIPSKCEA. Positions 33–52 are excised as a propeptide; it reads VSNDMQPLEARTADLVQQPR. Cys-61 and Cys-72 form a disulfide bridge. Pro-77 carries the post-translational modification Proline amide.

This sequence belongs to the secapin family. In terms of tissue distribution, expressed by the venom gland.

The protein resides in the secreted. Its function is as follows. Serine protease inhibitor which exhibits antifibrinolytic, antielastolytic and antimicrobial activities. Displays antimicrobial activity against bacteria and fungi. Likely functions in the innate immune response to microbial infection and possibly in the venom, as an antifibrinolytic agent. Induces hyperalgesia and edema mediated by leukotrienes when injected into mice. Does not induce hemolytic activity, mast cell degranulation, or chemotactic activity for polymorphonucleated leukocytes (PMNL). In Apis mellifera (Honeybee), this protein is Secapin-2.